Consider the following 117-residue polypeptide: Non-specific lipid-transfer protein 1 (117 aa).

A signal peptide spans 1–26; sequence MARAQVLLMAAALVLMLTAAPRAAVA. Intrachain disulfides connect Cys29–Cys76, Cys39–Cys53, Cys54–Cys99, and Cys74–Cys113. Residue Asp33 is the site of Cis-14-hydroxy-10,13-dioxo-7-heptadecenoic acid aspartate ester attachment.

This sequence belongs to the plant LTP family. In terms of tissue distribution, aleurone layer of developing and germinating seeds.

Plant non-specific lipid-transfer proteins transfer phospholipids as well as galactolipids across membranes. May play a role in wax or cutin deposition in the cell walls of expanding epidermal cells and certain secretory tissues. This is Non-specific lipid-transfer protein 1 (LTP1) from Hordeum vulgare (Barley).